The sequence spans 1493 residues: Inactive serine/threonine-protein kinase TEX14 (1493 aa).

ANK repeat units lie at residues 27-54, 55-84, and 88-117; these read LHEYVKQGNYVKVKRILKKGIYVDAVNS, LGQTALFIAALLGLTKLVDVLVDYGADPNH, and DGSTPVHAAAFSGNQWILSKLLDAGGDLRL. The Protein kinase domain occupies 198–511; it reads VISAQNIYSF…IMKNDLKDFI (314 aa). Residues 204 to 212 and Lys-266 each bind ATP; that span reads IYSFGFGKF. Phosphoserine; by PLK1 is present on Ser-430. The span at 559–573 shows a compositional bias: polar residues; it reads GSQFHSPRGHSSPTG. Positions 559–615 are disordered; sequence GSQFHSPRGHSSPTGKATPEPPVPDVSPVAQQTHRQDAASPACSVAEEARNPSPDQT. 2 positions are modified to phosphoserine: Ser-560 and Ser-660. 2 disordered regions span residues 782–904 and 940–1081; these read HDSP…RISM and AATG…LTPD. The GPPX3Y signature appears at 789-795; the sequence is GPPASSY. The short motif at 846–854 is the D-box element; it reads KASLERDRN. Composition is skewed to polar residues over residues 855–904 and 1001–1020; these read QNTS…RISM and CGQTDSSDQRGRQSGPQRFT. Residues 1026–1037 show a composition bias toward basic and acidic residues; sequence PPREDEQPEHSE. The segment covering 1053–1064 has biased composition (polar residues); sequence YSGQSAQSTCSP. A compositionally biased stretch (acidic residues) spans 1066-1075; the sequence is SSEDTEDMTD. Ser-1100 carries the post-translational modification Phosphoserine. The tract at residues 1115-1167 is disordered; the sequence is RPQASGEEKFQMRKNLGKNSEILTKSQFQPIRSPEGEQDETLKEPPKEVKEKD. Residues 1131–1144 show a composition bias toward polar residues; sequence GKNSEILTKSQFQP. Over residues 1154-1167 the composition is skewed to basic and acidic residues; it reads ETLKEPPKEVKEKD. Ser-1262 is subject to Phosphoserine. Disordered regions lie at residues 1288–1307 and 1341–1466; these read GAGSSSIAKAPDTSRCATQR and KGQQ…EEEE. Residues 1343 to 1362 show a composition bias toward polar residues; sequence QQVSSTALDENTASRPGSTE. The segment covering 1363–1380 has biased composition (basic and acidic residues); the sequence is NDQRHLEEQETHSNKEDS. Ser-1400 bears the Phosphoserine mark. Over residues 1426 to 1456 the composition is skewed to basic and acidic residues; that stretch reads PAREASSKDQEVGEKKRKGEESTKPEKRKPE. Phosphoserine is present on Ser-1492.

The protein belongs to the protein kinase superfamily. In terms of assembly, interacts with KIF23 and RBM44. Interacts with CEP55; inhibiting interaction between CEP55 and PDCD6IP/ALIX and TSG101. Post-translationally, phosphorylated on Thr residues by CDK1 during early phases of mitosis, promoting the interaction with PLK1 and recruitment to kinetochores. Phosphorylated on Ser-430 by PLK1 during late prometaphase promotes the rapid depletion from kinetochores and its subsequent degradation by the APC/C complex.

Its subcellular location is the cytoplasm. The protein resides in the midbody. It localises to the chromosome. The protein localises to the centromere. It is found in the kinetochore. Its function is as follows. Required both for the formation of intercellular bridges during meiosis and for kinetochore-microtubule attachment during mitosis. Intercellular bridges are evolutionarily conserved structures that connect differentiating germ cells and are required for spermatogenesis and male fertility. Acts by promoting the conversion of midbodies into intercellular bridges via its interaction with CEP55: interaction with CEP55 inhibits the interaction between CEP55 and PDCD6IP/ALIX and TSG101, blocking cell abscission and leading to transform midbodies into intercellular bridges. Also plays a role during mitosis: recruited to kinetochores by PLK1 during early mitosis and regulates the maturation of the outer kinetochores and microtubule attachment. Has no protein kinase activity in vitro. This is Inactive serine/threonine-protein kinase TEX14 (TEX14) from Bos taurus (Bovine).